Consider the following 94-residue polypeptide: Large ribosomal subunit protein bL25 (94 aa).

It belongs to the bacterial ribosomal protein bL25 family. Part of the 50S ribosomal subunit; part of the 5S rRNA/L5/L18/L25 subcomplex. Contacts the 5S rRNA. Binds to the 5S rRNA independently of L5 and L18.

Its function is as follows. This is one of the proteins that binds to the 5S RNA in the ribosome where it forms part of the central protuberance. The sequence is that of Large ribosomal subunit protein bL25 from Shigella boydii serotype 18 (strain CDC 3083-94 / BS512).